A 192-amino-acid chain; its full sequence is Ion-translocating oxidoreductase complex subunit A (192 aa).

6 helical membrane passes run 5–25, 39–59, 65–85, 102–122, 134–154, and 171–191; these read ALILISTVLVNNFVLVKFLGL, TGMGLATTFVLTLSSVCSYLV, APLGLEYLRTIAFILVIAAVV, VLGIFLPLITTNCAVLGVALL, ALYGLGAAVGFSLVLVLFASI, and AIALITAGLMSLGFMGFIGLV.

The protein belongs to the NqrDE/RnfAE family. As to quaternary structure, the complex is composed of six subunits: RnfA, RnfB, RnfC, RnfD, RnfE and RnfG.

The protein localises to the cell inner membrane. Functionally, part of a membrane-bound complex that couples electron transfer with translocation of ions across the membrane. This is Ion-translocating oxidoreductase complex subunit A from Thioalkalivibrio sulfidiphilus (strain HL-EbGR7).